The chain runs to 594 residues: Glutamate decarboxylase 1 (594 aa).

A compositionally biased stretch (low complexity) spans 1 to 13 (MASSTPSSSATSS). Residues 1-23 (MASSTPSSSATSSNAGADPNTTN) are disordered. Serine 78 is subject to Phosphoserine. Residue 190–192 (QLS) coordinates 4-aminobutanoate. Lysine 405 is subject to N6-(pyridoxal phosphate)lysine. Position 567 (arginine 567) interacts with 4-aminobutanoate.

It belongs to the group II decarboxylase family. Homodimer. Pyridoxal 5'-phosphate is required as a cofactor.

The catalysed reaction is L-glutamate + H(+) = 4-aminobutanoate + CO2. Functionally, catalyzes the synthesis of the inhibitory neurotransmitter gamma-aminobutyric acid (GABA) with pyridoxal 5'-phosphate as cofactor. The sequence is that of Glutamate decarboxylase 1 (GAD1) from Pan troglodytes (Chimpanzee).